The following is a 255-amino-acid chain: Thiazole synthase (255 aa).

Lysine 96 acts as the Schiff-base intermediate with DXP in catalysis. 1-deoxy-D-xylulose 5-phosphate contacts are provided by residues glycine 157, 183–184 (AG), and 205–206 (NS).

The protein belongs to the ThiG family. Homotetramer. Forms heterodimers with either ThiH or ThiS.

Its subcellular location is the cytoplasm. It carries out the reaction [ThiS sulfur-carrier protein]-C-terminal-Gly-aminoethanethioate + 2-iminoacetate + 1-deoxy-D-xylulose 5-phosphate = [ThiS sulfur-carrier protein]-C-terminal Gly-Gly + 2-[(2R,5Z)-2-carboxy-4-methylthiazol-5(2H)-ylidene]ethyl phosphate + 2 H2O + H(+). The protein operates within cofactor biosynthesis; thiamine diphosphate biosynthesis. Functionally, catalyzes the rearrangement of 1-deoxy-D-xylulose 5-phosphate (DXP) to produce the thiazole phosphate moiety of thiamine. Sulfur is provided by the thiocarboxylate moiety of the carrier protein ThiS. In vitro, sulfur can be provided by H(2)S. The sequence is that of Thiazole synthase from Staphylococcus carnosus (strain TM300).